The chain runs to 127 residues: Protein ApaG (127 aa).

The ApaG domain occupies 3 to 127 (DQPPTEIQIS…FRLAAATVFH (125 aa)).

In Acidithiobacillus ferrooxidans (strain ATCC 23270 / DSM 14882 / CIP 104768 / NCIMB 8455) (Ferrobacillus ferrooxidans (strain ATCC 23270)), this protein is Protein ApaG.